The sequence spans 339 residues: Deubiquitinase and deneddylase Dub2 (339 aa).

A helical membrane pass occupies residues 36-56 (IIIALFLIVISCGLILCAYTF). Residues His-203, Asp-220, and Cys-282 contribute to the active site.

The protein belongs to the peptidase C48 family.

Its subcellular location is the secreted. It is found in the host cell. It localises to the membrane. Effector proteins function to alter host cell physiology and promote bacterial survival in host tissues. This protease possesses deubiquitinating and deneddylating activities. In Chlamydia trachomatis serovar L2 (strain ATCC VR-902B / DSM 19102 / 434/Bu), this protein is Deubiquitinase and deneddylase Dub2 (cdu2).